A 363-amino-acid polypeptide reads, in one-letter code: Endopolygalacturonase 1 (363 aa).

An N-terminal signal peptide occupies residues 1–17 (MVSYLFVLGALASVAIA). The propeptide occupies 18 to 26 (SPVPELKAR). Cysteine 29 and cysteine 44 are joined by a disulfide. PbH1 repeat units follow at residues 188–209 (STGV…AVNS), 210–230 (GTNI…SIGS), 239–260 (VKSV…RIKT), and 268–290 (VSDI…VIEQ). The active-site Proton donor is the aspartate 202. The cysteines at positions 204 and 220 are disulfide-linked. The N-linked (GlcNAc...) asparagine glycan is linked to asparagine 212. Histidine 224 is an active-site residue. Disulfide bonds link cysteine 330–cysteine 333 and cysteine 352–cysteine 363.

Belongs to the glycosyl hydrolase 28 family.

It is found in the secreted. It carries out the reaction (1,4-alpha-D-galacturonosyl)n+m + H2O = (1,4-alpha-D-galacturonosyl)n + (1,4-alpha-D-galacturonosyl)m.. Involved in maceration and soft-rotting of plant tissue. Hydrolyzes the 1,4-alpha glycosidic bonds of de-esterified pectate in the smooth region of the plant cell wall. The polypeptide is Endopolygalacturonase 1 (PG1) (Colletotrichum lindemuthianum (Bean anthracnose fungus)).